A 931-amino-acid polypeptide reads, in one-letter code: NEDD4-binding protein 1 (931 aa).

The KH-like domain occupies glycine 75–asparagine 159. 3 disordered regions span residues methionine 289 to serine 329, glutamine 413 to aspartate 474, and cysteine 547 to serine 571. Composition is skewed to basic and acidic residues over residues threonine 290–proline 309 and glutamine 319–serine 329. Positions serine 416–serine 434 are enriched in polar residues. Composition is skewed to basic and acidic residues over residues histidine 435–cysteine 444 and asparagine 456–aspartate 467. Polar residues predominate over residues cysteine 547–histidine 557. Residues leucine 659–aspartate 811 form the RNase NYN domain. Positions leucine 841–histidine 863 are disordered. The coCUN stretch occupies residues arginine 884–aspartate 931.

This sequence belongs to the N4BP1 family.

It is found in the cytoplasm. It localises to the cytosol. Its subcellular location is the nucleus. The protein resides in the nucleolus. The protein localises to the PML body. In terms of biological role, potent suppressor of cytokine production that acts as a regulator of innate immune signaling and inflammation. Acts as a key negative regulator of select cytokine and chemokine responses elicited by TRIF-independent Toll-like receptors (TLRs), thereby limiting inflammatory cytokine responses to minor insults. Has ribonuclease activity. In Gallus gallus (Chicken), this protein is NEDD4-binding protein 1.